Reading from the N-terminus, the 280-residue chain is MTWKIVTDSGCDLRSLTRQSKELRFERVPLTLQIGTEIFRDDDGLDIDNMMTTMYQSSKATTSSCPSPEAFLQAYRGSDNVIVMTITGTLSGSHNSARLAKNELLEENPNVNIHLIDSLSAGGEMDLLVLELERLINLGLSFEEVVKQITAYQQKTRLIFVLAKVDNLVKNGRLSKLVGKVIGLLNIRMVGKASNKGTLELLQKARGQKKAVSALIEEIQKEGYVGGKVYIAHAQNPKICEQISEKIKSLYPDAVIQTGRTSGLCSFYAEDGGLLMGYEI.

A DegV domain is found at 3–280 (WKIVTDSGCD…DGGLLMGYEI (278 aa)). Hexadecanoate-binding residues include Ser63 and Ser91.

Its function is as follows. May bind long-chain fatty acids, such as palmitate, and may play a role in lipid transport or fatty acid metabolism. This chain is DegV domain-containing protein spyM18_1709, found in Streptococcus pyogenes serotype M18 (strain MGAS8232).